A 145-amino-acid polypeptide reads, in one-letter code: Peptidyl-prolyl cis-trans isomerase (145 aa).

Residues 1 to 145 form the PPIase cyclophilin-type domain; it reads MTQAILETEK…LSVKIVTDAA (145 aa).

It belongs to the cyclophilin-type PPIase family.

The enzyme catalyses [protein]-peptidylproline (omega=180) = [protein]-peptidylproline (omega=0). In terms of biological role, PPIases accelerate the folding of proteins. It catalyzes the cis-trans isomerization of proline imidic peptide bonds in oligopeptides. This Synechococcus elongatus (strain ATCC 33912 / PCC 7942 / FACHB-805) (Anacystis nidulans R2) protein is Peptidyl-prolyl cis-trans isomerase (rot).